The following is a 117-amino-acid chain: uncharacterized protein (117 aa).

It belongs to the mimivirus R69 family.

This is an uncharacterized protein from Acanthamoeba polyphaga mimivirus (APMV).